Consider the following 231-residue polypeptide: 2,3,4,5-tetrahydropyridine-2,6-dicarboxylate N-acetyltransferase (231 aa).

The protein belongs to the transferase hexapeptide repeat family. DapH subfamily.

It catalyses the reaction (S)-2,3,4,5-tetrahydrodipicolinate + acetyl-CoA + H2O = L-2-acetamido-6-oxoheptanedioate + CoA. The protein operates within amino-acid biosynthesis; L-lysine biosynthesis via DAP pathway; LL-2,6-diaminopimelate from (S)-tetrahydrodipicolinate (acetylase route): step 1/3. Its function is as follows. Catalyzes the transfer of an acetyl group from acetyl-CoA to tetrahydrodipicolinate. The polypeptide is 2,3,4,5-tetrahydropyridine-2,6-dicarboxylate N-acetyltransferase (Thermosipho melanesiensis (strain DSM 12029 / CIP 104789 / BI429)).